The chain runs to 293 residues: Diaminopimelate epimerase (293 aa).

Substrate-binding residues include Asn17, Gln47, and Asn67. Cys76 serves as the catalytic Proton donor. Substrate contacts are provided by residues 77 to 78 (GN), Asn164, Asn197, and 215 to 216 (ER). The active-site Proton acceptor is Cys224. 225–226 (GS) lines the substrate pocket.

Belongs to the diaminopimelate epimerase family. In terms of assembly, homodimer.

The protein localises to the cytoplasm. It carries out the reaction (2S,6S)-2,6-diaminopimelate = meso-2,6-diaminopimelate. The protein operates within amino-acid biosynthesis; L-lysine biosynthesis via DAP pathway; DL-2,6-diaminopimelate from LL-2,6-diaminopimelate: step 1/1. Its function is as follows. Catalyzes the stereoinversion of LL-2,6-diaminopimelate (L,L-DAP) to meso-diaminopimelate (meso-DAP), a precursor of L-lysine and an essential component of the bacterial peptidoglycan. In Rhodopseudomonas palustris (strain BisB5), this protein is Diaminopimelate epimerase.